The primary structure comprises 188 residues: Casparian strip membrane protein 1 (188 aa).

The Cytoplasmic segment spans residues 1-24 (MKAGALELGHASKTTKSGVNRGMS). The chain crosses the membrane as a helical span at residues 25–45 (ILDLFIRIIAIIATLGSAIAM). The Extracellular segment spans residues 46-72 (GTTNETLPFFTQFVRFKAKYSDLPTFT). N49 carries an N-linked (GlcNAc...) asparagine glycan. A helical membrane pass occupies residues 73–93 (FFVVANAIVSAYLVLSLGLSI). Residues 94 to 105 (YHIMRSRAQATR) are Cytoplasmic-facing. Residues 106-126 (IALIFFDAAMLGLLTGGASAS) traverse the membrane as a helical segment. At 127-159 (AAIVYLAHKGNRKTNWFPICQQYDSFCHRTSGS) the chain is on the extracellular side. The chain crosses the membrane as a helical span at residues 160–180 (LVGSFAGSVLIILLIFLSAIA). Over 181–188 (LSRQSLNH) the chain is Cytoplasmic.

The protein belongs to the Casparian strip membrane proteins (CASP) family. In terms of assembly, homodimer and heterodimers.

It localises to the cell membrane. Functionally, regulates membrane-cell wall junctions and localized cell wall deposition. Required for establishment of the Casparian strip membrane domain (CSD) and the subsequent formation of Casparian strips, a cell wall modification of the root endodermis that determines an apoplastic barrier between the intraorganismal apoplasm and the extraorganismal apoplasm and prevents lateral diffusion. In Solanum tuberosum (Potato), this protein is Casparian strip membrane protein 1.